Reading from the N-terminus, the 192-residue chain is MIVLGVDPGSLKTGYGVVQHHNGSFSVLAAGVIRLQAAWSHPERIGIICRELEQVIAEFQPERVALETAFLSHNVQAALKLGQVRGAVIGLVVRYALPIYEYAPREVKSAITGKGAATKEQVAFMVSRMLSLHTVPKPHDVTDALGIALCDILRGESRQSGVPPRTNSRRKSGTGGSWEQFVRQSPNVVVRS.

Catalysis depends on residues Asp7, Glu67, and Asp140. 3 residues coordinate Mg(2+): Asp7, Glu67, and Asp140. The interval 158–192 (RQSGVPPRTNSRRKSGTGGSWEQFVRQSPNVVVRS) is disordered. Residues 182–192 (VRQSPNVVVRS) show a composition bias toward polar residues.

Belongs to the RuvC family. In terms of assembly, homodimer which binds Holliday junction (HJ) DNA. The HJ becomes 2-fold symmetrical on binding to RuvC with unstacked arms; it has a different conformation from HJ DNA in complex with RuvA. In the full resolvosome a probable DNA-RuvA(4)-RuvB(12)-RuvC(2) complex forms which resolves the HJ. Mg(2+) serves as cofactor.

The protein localises to the cytoplasm. The enzyme catalyses Endonucleolytic cleavage at a junction such as a reciprocal single-stranded crossover between two homologous DNA duplexes (Holliday junction).. Its function is as follows. The RuvA-RuvB-RuvC complex processes Holliday junction (HJ) DNA during genetic recombination and DNA repair. Endonuclease that resolves HJ intermediates. Cleaves cruciform DNA by making single-stranded nicks across the HJ at symmetrical positions within the homologous arms, yielding a 5'-phosphate and a 3'-hydroxyl group; requires a central core of homology in the junction. The consensus cleavage sequence is 5'-(A/T)TT(C/G)-3'. Cleavage occurs on the 3'-side of the TT dinucleotide at the point of strand exchange. HJ branch migration catalyzed by RuvA-RuvB allows RuvC to scan DNA until it finds its consensus sequence, where it cleaves and resolves the cruciform DNA. The chain is Crossover junction endodeoxyribonuclease RuvC from Chlorobium chlorochromatii (strain CaD3).